The chain runs to 245 residues: Probable transcriptional regulatory protein NSE_0641 (245 aa).

The disordered stretch occupies residues 1–22 (MAGHSQYANIKHRKNAQDAKRA).

It belongs to the TACO1 family.

It localises to the cytoplasm. This is Probable transcriptional regulatory protein NSE_0641 from Neorickettsia sennetsu (strain ATCC VR-367 / Miyayama) (Ehrlichia sennetsu).